We begin with the raw amino-acid sequence, 250 residues long: Ubiquinone biosynthesis O-methyltransferase (250 aa).

Residues arginine 41, glycine 72, aspartate 93, and methionine 136 each contribute to the S-adenosyl-L-methionine site.

Belongs to the methyltransferase superfamily. UbiG/COQ3 family.

The enzyme catalyses a 3-demethylubiquinol + S-adenosyl-L-methionine = a ubiquinol + S-adenosyl-L-homocysteine + H(+). It catalyses the reaction a 3-(all-trans-polyprenyl)benzene-1,2-diol + S-adenosyl-L-methionine = a 2-methoxy-6-(all-trans-polyprenyl)phenol + S-adenosyl-L-homocysteine + H(+). The protein operates within cofactor biosynthesis; ubiquinone biosynthesis. Functionally, O-methyltransferase that catalyzes the 2 O-methylation steps in the ubiquinone biosynthetic pathway. This chain is Ubiquinone biosynthesis O-methyltransferase, found in Agrobacterium fabrum (strain C58 / ATCC 33970) (Agrobacterium tumefaciens (strain C58)).